Reading from the N-terminus, the 52-residue chain is Proteinase inhibitor (52 aa).

Glutamine 1 bears the Pyrrolidone carboxylic acid mark. Intrachain disulfides connect cysteine 3/cysteine 40, cysteine 6/cysteine 24, cysteine 7/cysteine 36, and cysteine 13/cysteine 49.

The protein belongs to the protease inhibitor I20 (potato type II proteinase inhibitor) family.

The protein resides in the secreted. This chain is Proteinase inhibitor, found in Solanum melongena (Eggplant).